Reading from the N-terminus, the 498-residue chain is Glycerol kinase (498 aa).

Position 14 (T14) interacts with ADP. The ATP site is built by T14, T15, and S16. Residue T14 participates in sn-glycerol 3-phosphate binding. R18 lines the ADP pocket. Sn-glycerol 3-phosphate contacts are provided by R84, E85, Y136, and D243. The glycerol site is built by R84, E85, Y136, D243, and Q244. Residues T265 and G308 each contribute to the ADP site. ATP contacts are provided by T265, G308, Q312, and G409. G409 and N413 together coordinate ADP.

It belongs to the FGGY kinase family.

It carries out the reaction glycerol + ATP = sn-glycerol 3-phosphate + ADP + H(+). Its pathway is polyol metabolism; glycerol degradation via glycerol kinase pathway; sn-glycerol 3-phosphate from glycerol: step 1/1. With respect to regulation, inhibited by fructose 1,6-bisphosphate (FBP). In terms of biological role, key enzyme in the regulation of glycerol uptake and metabolism. Catalyzes the phosphorylation of glycerol to yield sn-glycerol 3-phosphate. The protein is Glycerol kinase of Shewanella frigidimarina (strain NCIMB 400).